A 273-amino-acid polypeptide reads, in one-letter code: UPF0173 metal-dependent hydrolase Bpro_4324 (273 aa).

Belongs to the UPF0173 family.

This Polaromonas sp. (strain JS666 / ATCC BAA-500) protein is UPF0173 metal-dependent hydrolase Bpro_4324.